A 447-amino-acid chain; its full sequence is N-succinylarginine dihydrolase (447 aa).

Residues 19–28 (AGLSFGNEAS), Asn-110, and 137–138 (HR) contribute to the substrate site. Residue Glu-174 is part of the active site. Arg-212 provides a ligand contact to substrate. The active site involves His-248. Substrate-binding residues include Asp-250 and Asn-359. Cys-365 (nucleophile) is an active-site residue.

The protein belongs to the succinylarginine dihydrolase family. As to quaternary structure, homodimer.

It carries out the reaction N(2)-succinyl-L-arginine + 2 H2O + 2 H(+) = N(2)-succinyl-L-ornithine + 2 NH4(+) + CO2. It functions in the pathway amino-acid degradation; L-arginine degradation via AST pathway; L-glutamate and succinate from L-arginine: step 2/5. In terms of biological role, catalyzes the hydrolysis of N(2)-succinylarginine into N(2)-succinylornithine, ammonia and CO(2). The polypeptide is N-succinylarginine dihydrolase (Salmonella heidelberg (strain SL476)).